The primary structure comprises 398 residues: Phosphoglycerate kinase (398 aa).

Substrate is bound by residues Asp-23–Asn-25, Arg-38, His-61–Lys-64, Arg-122, and Arg-155. Residues Lys-206, Gly-297, Glu-328, and Gly-354–Ser-357 each bind ATP.

Belongs to the phosphoglycerate kinase family. Monomer.

It is found in the cytoplasm. The enzyme catalyses (2R)-3-phosphoglycerate + ATP = (2R)-3-phospho-glyceroyl phosphate + ADP. The protein operates within carbohydrate degradation; glycolysis; pyruvate from D-glyceraldehyde 3-phosphate: step 2/5. The chain is Phosphoglycerate kinase from Clostridium botulinum (strain Langeland / NCTC 10281 / Type F).